We begin with the raw amino-acid sequence, 666 residues long: DNA-directed RNA polymerase III subunit rpc3 (666 aa).

Disordered regions lie at residues 130-153 (HEPH…VHSY) and 375-455 (SRLD…TESR). Polar residues predominate over residues 135 to 153 (NGNSNETNGATNGNGVHSY). The segment at 593–614 (TYKAMSRCLQRLDVEKRRKANI) is leucine-zipper.

The protein belongs to the RNA polymerase beta chain family. In terms of assembly, component of the RNA polymerase III (Pol III) complex consisting of 17 subunits.

The protein localises to the nucleus. DNA-dependent RNA polymerase catalyzes the transcription of DNA into RNA using the four ribonucleoside triphosphates as substrates. Specific core component of RNA polymerase III which synthesizes small RNAs, such as 5S rRNA and tRNAs. This chain is DNA-directed RNA polymerase III subunit rpc3 (rpc82), found in Botryotinia fuckeliana (strain B05.10) (Noble rot fungus).